A 125-amino-acid chain; its full sequence is MGKAKSPRRVADNEALAVGTTIRGSAQKLNLVAELIRGKKAEEALNILAFSKKAMARDASKVLASAIANAENNHDLDVDALVVAEASVGKSITMKRFHTRGRGKSTRILKPFSKLRIVVREVEEA.

The protein belongs to the universal ribosomal protein uL22 family. As to quaternary structure, part of the 50S ribosomal subunit.

This protein binds specifically to 23S rRNA; its binding is stimulated by other ribosomal proteins, e.g. L4, L17, and L20. It is important during the early stages of 50S assembly. It makes multiple contacts with different domains of the 23S rRNA in the assembled 50S subunit and ribosome. Functionally, the globular domain of the protein is located near the polypeptide exit tunnel on the outside of the subunit, while an extended beta-hairpin is found that lines the wall of the exit tunnel in the center of the 70S ribosome. The sequence is that of Large ribosomal subunit protein uL22 from Erythrobacter litoralis (strain HTCC2594).